A 953-amino-acid polypeptide reads, in one-letter code: MSKKRLHEIAKEIGKSSKEVVEHAKYLGLDVKSHASSVEEADAKKIISSFSKASKPDVTASQAVKPKEVAQPSVTVVKETGSEHVEKTQVSKPKSRNFKAEREARAKEQAARKQANGSSHRSQERRGGYRQPNNHQTNEQGDKRITHRSQGDTNDKRIERKASNVSPRHDNHQLVGDRNRSFAKENHKNGRFTNQKKQGRQEPQSKSPKIDFKARAAALKAEQNAEYSRQSETRFRAQQEAKRLAELARQEAKEAALKAQAEEMSHREAALKSIEEAETKLKSSNISAKSTADNRRKKQARPEKNRELTHHSQEGQKKNKKSWNSQNQVRNQKNSNWNKNKKTKKGKNVKNTNTAPKPVTERKFHELPKEFEYTEGMTVAEIAKRIKREPAEIVKKLFMMGVMATQNQSLDGDTIELLMVDYGIEAKAKVEVDDADIERFFEDENYLNPENIVERAPVVTIMGHVDHGKTTLLDTLRNSRVATGEAGGITQHIGAYQIEEAGKKITFLDTPGHAAFTSMRARGASVTDITILIVAADDGVMPQTIEAINHSKAAGVPIIVAINKIDKPGANPERVIAELAEYGIISTAWGGECEFVEISAKFNKNIDELLETVLLVAEVEELKADPTVRAIGTVIEARLDKGKGAIATLLVQQGTLHVQDPIVVGNTFGRVRAMVNDLGRRVKSAEPSTPVSITGLNETPMAGDHFAVYADEKAARAAGEERSKRALLKQRQNTQRVSLDNLFDTLKAGEIKTVNVIIKADVQGSVEALAASLVKIEVEGVRVNVVHSAVGAINESDVTLAEASNAVIIGFNVRPTPQARQQADTDDVEIRLHSIIYKVIEEVEEAMKGKLDPVYQEKVLGEAIIRETFKVSKVGTIGGFMVINGKVTRDSSVRVIRDSVVIFDGKLASLKHYKDDVKEVGNAQEGGLMIENFNDLKVDDTIEAYIMEEIVRK.

2 disordered regions span residues 52-247 (KASK…LAEL) and 279-363 (TKLK…TERK). Basic and acidic residues-rich tracts occupy residues 80–89 (TGSEHVEKTQ), 98–111 (FKAE…EQAA), and 140–188 (QGDK…ENHK). Residues 191–207 (RFTNQKKQGRQEPQSKS) show a composition bias toward polar residues. Residues 229–247 (RQSETRFRAQQEAKRLAEL) show a composition bias toward basic and acidic residues. Positions 282 to 291 (KSSNISAKST) are enriched in polar residues. Positions 300–317 (ARPEKNRELTHHSQEGQK) are enriched in basic and acidic residues. Positions 322 to 338 (SWNSQNQVRNQKNSNWN) are enriched in low complexity. Residues 339–348 (KNKKTKKGKN) show a composition bias toward basic residues. One can recognise a tr-type G domain in the interval 454–623 (ERAPVVTIMG…LLVAEVEELK (170 aa)). Positions 463–470 (GHVDHGKT) are G1. A GTP-binding site is contributed by 463–470 (GHVDHGKT). Residues 488-492 (GITQH) form a G2 region. Residues 509–512 (DTPG) form a G3 region. GTP is bound by residues 509-513 (DTPGH) and 563-566 (NKID). The interval 563–566 (NKID) is G4. Residues 599 to 601 (SAK) are G5.

It belongs to the TRAFAC class translation factor GTPase superfamily. Classic translation factor GTPase family. IF-2 subfamily.

It localises to the cytoplasm. Functionally, one of the essential components for the initiation of protein synthesis. Protects formylmethionyl-tRNA from spontaneous hydrolysis and promotes its binding to the 30S ribosomal subunits. Also involved in the hydrolysis of GTP during the formation of the 70S ribosomal complex. In Streptococcus pyogenes serotype M5 (strain Manfredo), this protein is Translation initiation factor IF-2.